A 132-amino-acid chain; its full sequence is uncharacterized protein (132 aa).

Its function is as follows. The presence of the two linear plasmids, termed pGKL1 and pGKL2, in strains of Kluyveromyces lactis confers the killer phenotype to the host cell, by promoting the secretion of a toxin able to inhibit the growth of sensitive strains. This is an uncharacterized protein from Kluyveromyces lactis (strain ATCC 8585 / CBS 2359 / DSM 70799 / NBRC 1267 / NRRL Y-1140 / WM37) (Yeast).